The sequence spans 474 residues: PTS system N-acetylmuramic acid-specific EIIBC component (474 aa).

The PTS EIIB type-1 domain occupies 1–89 (MAKEISSELL…SELLGEAPVQ (89 aa)). Topologically, residues 1–123 (MAKEISSELL…LAKFATIFTP (123 aa)) are cytoplasmic. C29 serves as the catalytic Phosphocysteine intermediate; for EIIB activity. The 360-residue stretch at 115 to 474 (AKFATIFTPL…LFGCRNVNLD (360 aa)) folds into the PTS EIIC type-1 domain. Residues 124 to 144 (LIPGFIAAGLLLGIATLIATV) form a helical membrane-spanning segment. The Periplasmic portion of the chain corresponds to 145–157 (MHVPADAQGTLPD). A helical transmembrane segment spans residues 158–178 (ALNFMKVFSKGLFTFLVILVG). Residues 179 to 180 (YN) lie on the Cytoplasmic side of the membrane. A helical membrane pass occupies residues 181–201 (AAQAFGGTGVNGAIIAALFLL). The Periplasmic portion of the chain corresponds to 202–217 (GYNPAATTGYYAGFHD). The chain crosses the membrane as a helical span at residues 218–238 (FFGLPIDPRGNIIGVLIAAWA). The Cytoplasmic portion of the chain corresponds to 239–260 (CARIEGMVRRFMPDDLDMLLTS). A helical transmembrane segment spans residues 261 to 281 (LITLLITATLAYLIIMPLGGW). The Periplasmic portion of the chain corresponds to 282–301 (LFEGMSWLFMHLNSNPLGCA). Residues 302 to 322 (VLAGLFLIAVVFGVHQGFIPV) traverse the membrane as a helical segment. The Cytoplasmic portion of the chain corresponds to 323 to 334 (YLALMDSQGFNS). The helical transmembrane segment at 335-355 (LFPILSMAGAGQVGAALALYW) threads the bilayer. Topologically, residues 356–368 (RAQPHSALRSQVR) are periplasmic. Residues 369-389 (GAIIPGLLGVGEPLIYGVTLP) form a helical membrane-spanning segment. Residues 390–393 (RMKP) lie on the Cytoplasmic side of the membrane. Residues 394–414 (FITACLGGAAGGLFIGLIAWW) form a helical membrane-spanning segment. Over 415-440 (GLPMGLNSAFGPSGLVALPLMTSAQG) the chain is Periplasmic. The helical transmembrane segment at 441-461 (ILPAMAVYAGGILVAWVCGFI) threads the bilayer. Residues 462–474 (FTTLFGCRNVNLD) lie on the Cytoplasmic side of the membrane.

Its subcellular location is the cell inner membrane. It catalyses the reaction N-acetyl-beta-D-muramate(out) + N(pros)-phospho-L-histidyl-[protein] = N-acetyl-beta-D-muramate 6-phosphate(in) + L-histidyl-[protein]. Its function is as follows. The phosphoenolpyruvate-dependent sugar phosphotransferase system (sugar PTS), a major carbohydrate active transport system, catalyzes the phosphorylation of incoming sugar substrates concomitantly with their translocation across the cell membrane. This system is involved in N-acetylmuramic acid (MurNAc) transport, yielding cytoplasmic MurNAc-6-P. Is also able to take up anhydro-N-acetylmuramic acid (anhMurNAc), but cannot phosphorylate the carbon 6, probably because of the 1,6-anhydro ring. The polypeptide is PTS system N-acetylmuramic acid-specific EIIBC component (murP) (Escherichia coli O157:H7).